A 702-amino-acid polypeptide reads, in one-letter code: Sodium/hydrogen exchanger 6 (702 aa).

Transmembrane regions (helical) follow at residues 72-92, 104-124, 177-197, 212-232, 253-273, 279-299, 325-345, 373-393, 415-435, 437-457, 480-500, and 516-536; these read SANL…IWLF, GLAM…IHVP, VTFD…FYAG, ILAY…SIMY, CLLF…AIFH, VELY…AIVL, IGIF…TGVV, TFLL…FCGI, FELL…LTLF, FQNH…IFLG, NFQH…ALAI, and LLIV…MLSC.

The protein belongs to the monovalent cation:proton antiporter 1 (CPA1) transporter (TC 2.A.36) family. As to quaternary structure, homodimer. Interacts with RACK1; regulates the distribution of SLC9A6 between endosomes and the plasma membrane. Post-translationally, ubiquitinated (in vitro). Glycosylated.

The protein localises to the endosome membrane. It localises to the recycling endosome membrane. The protein resides in the early endosome membrane. Its subcellular location is the late endosome membrane. It is found in the cell membrane. It carries out the reaction Na(+)(in) + H(+)(out) = Na(+)(out) + H(+)(in). It catalyses the reaction K(+)(in) + H(+)(out) = K(+)(out) + H(+)(in). Functionally, endosomal Na(+), K(+)/H(+) antiporter. Mediates the electroneutral exchange of endosomal luminal H(+) for a cytosolic Na(+) or K(+). By facilitating proton efflux, SLC9A6 counteracts the acidity generated by vacuolar (V)-ATPase, thereby limiting luminal acidification. Responsible for alkalizing and maintaining the endosomal pH, and consequently in, e.g., endosome maturation and trafficking of recycling endosomal cargo. Plays a critical role during neurodevelopment by regulating synaptic development and plasticity. Implicated in the maintenance of cell polarity in a manner that is dependent on its ability to modulate intravesicular pH. Regulates intracelular pH in some specialized cells, osteoclasts and stereocilia where this transporter localizes to the plasma membrane. The chain is Sodium/hydrogen exchanger 6 (Slc9a6) from Mus musculus (Mouse).